Reading from the N-terminus, the 884-residue chain is Probable leucine--tRNA ligase, cytoplasmic (884 aa).

Residues 40 to 50 carry the 'HIGH' region motif; the sequence is PYMNGKLHLGH. The 'KMSKS' region motif lies at 566-570; it reads KMSKS. Position 569 (Lys-569) interacts with ATP.

Belongs to the class-I aminoacyl-tRNA synthetase family.

Its subcellular location is the cytoplasm. The enzyme catalyses tRNA(Leu) + L-leucine + ATP = L-leucyl-tRNA(Leu) + AMP + diphosphate. This chain is Probable leucine--tRNA ligase, cytoplasmic, found in Vairimorpha ceranae (strain BRL01) (Microsporidian parasite).